A 422-amino-acid chain; its full sequence is Serine protease HTRA2, mitochondrial (422 aa).

A mitochondrion-targeting transit peptide spans 1–17 (MALRGSHRLEVIFKRCI). A propeptide spanning residues 18 to 74 (ASPVLHSQAGNRRSSQLAIKGVDPNSNGNSGQYQQNGEHKEKGWRRLVRFFVPFSLG) is cleaved from the precursor. The interval 28 to 55 (NRRSSQLAIKGVDPNSNGNSGQYQQNGE) is disordered. Residues 42-53 (NSNGNSGQYQQN) are compositionally biased toward low complexity. A helical transmembrane segment spans residues 64–82 (LVRFFVPFSLGAAVSAAII). 2 short sequence motifs (IAP-binding) span residues 75-78 (AAVS) and 94-97 (SKMT). Positions 139–302 (SNGSGFIIEQ…IPIDYVKVFL (164 aa)) are serine protease. Residues H157, D189, and S266 each act as charge relay system in the active site. Residues 325–410 (MGITMLTLTP…TLDIVILRGV (86 aa)) enclose the PDZ domain.

The protein belongs to the peptidase S1C family. Interacts with th/DIAP1 (via BIR 2 domain).

Its subcellular location is the mitochondrion intermembrane space. It is found in the mitochondrion membrane. The enzyme catalyses Cleavage of non-polar aliphatic amino-acids at the P1 position, with a preference for Val, Ile and Met. At the P2 and P3 positions, Arg is selected most strongly with a secondary preference for other hydrophilic residues.. Its function is as follows. Serine protease that shows proteolytic activity against a non-specific substrate beta-casein. Promotes or induces cell death either by direct binding to and inhibition of BIRC proteins (also called inhibitor of apoptosis proteins, IAPs), leading to an increase in caspase activity, or by a BIRC inhibition-independent, caspase-independent and serine protease activity-dependent mechanism. Can antagonize antiapoptotic activity of th/Diap1 by directly inducing the degradation of th/Diap1. The polypeptide is Serine protease HTRA2, mitochondrial (Drosophila sechellia (Fruit fly)).